A 724-amino-acid polypeptide reads, in one-letter code: Methionine--tRNA ligase (724 aa).

A 'HIGH' region motif is present at residues 12 to 22; it reads PYVNNIPHLGN. Positions 143, 146, 155, and 158 each coordinate Zn(2+). The short motif at 330–334 is the 'KMSKS' region element; it reads KFSKS. Lys333 is an ATP binding site. One can recognise a tRNA-binding domain in the interval 560-665; that stretch reads FREKVLLKVV…KNPIPGERII (106 aa).

This sequence belongs to the class-I aminoacyl-tRNA synthetase family. MetG type 1 subfamily. Homodimer. Zn(2+) serves as cofactor.

It localises to the cytoplasm. It catalyses the reaction tRNA(Met) + L-methionine + ATP = L-methionyl-tRNA(Met) + AMP + diphosphate. In terms of biological role, is required not only for elongation of protein synthesis but also for the initiation of all mRNA translation through initiator tRNA(fMet) aminoacylation. This is Methionine--tRNA ligase from Borrelia garinii subsp. bavariensis (strain ATCC BAA-2496 / DSM 23469 / PBi) (Borreliella bavariensis).